Consider the following 491-residue polypeptide: Probable polygalacturonase (491 aa).

Residues P15–L35 form a helical membrane-spanning segment. 3 N-linked (GlcNAc...) asparagine glycosylation sites follow: N165, N175, and N214. PbH1 repeat units follow at residues S230–S256, C257–S278, I319–T340, and V348–G369. The active-site Proton donor is the D271. 2 N-linked (GlcNAc...) asparagine glycosylation sites follow: N399 and N421.

Belongs to the glycosyl hydrolase 28 family.

Its subcellular location is the membrane. It carries out the reaction (1,4-alpha-D-galacturonosyl)n+m + H2O = (1,4-alpha-D-galacturonosyl)n + (1,4-alpha-D-galacturonosyl)m.. In Vitis vinifera (Grape), this protein is Probable polygalacturonase.